The following is a 314-amino-acid chain: Hydroxyacyl-coenzyme A dehydrogenase, mitochondrial (314 aa).

The N-terminal 12 residues, 1-12, are a transit peptide targeting the mitochondrion; sequence MAFATRQLVRSL. Residues 34–39 and aspartate 57 contribute to the NAD(+) site; that span reads GGGLMG. The CoA site is built by serine 73 and lysine 80. Lysine 80 carries the post-translational modification N6-succinyllysine. N6-acetyllysine; alternate is present on residues lysine 81 and lysine 87. 2 positions are modified to N6-succinyllysine; alternate: lysine 81 and lysine 87. Glutamate 122 is a binding site for NAD(+). The residue at position 125 (lysine 125) is an N6-acetyllysine. An NAD(+)-binding site is contributed by lysine 127. N6-(2-hydroxyisobutyryl)lysine is present on lysine 127. The residue at position 136 (lysine 136) is an N6-acetyllysine; alternate. At lysine 136 the chain carries N6-succinyllysine; alternate. 2 residues coordinate NAD(+): serine 149 and asparagine 173. Serine 149 contributes to the CoA binding site. N6-acetyllysine is present on lysine 179. Lysine 185, lysine 192, and lysine 202 each carry N6-acetyllysine; alternate. Lysine 185, lysine 192, and lysine 202 each carry N6-succinyllysine; alternate. N6-succinyllysine is present on lysine 206. Lysine 212 and lysine 241 each carry N6-acetyllysine; alternate. Lysine 212 and lysine 241 each carry N6-succinyllysine; alternate. Residue lysine 305 coordinates NAD(+). Lysine 312 is modified (N6-acetyllysine; alternate). Lysine 312 is modified (N6-succinyllysine; alternate).

Belongs to the 3-hydroxyacyl-CoA dehydrogenase family. As to quaternary structure, homodimer. Interacts with GLUD1; this interaction inhibits the activation of glutamate dehydrogenase 1 (GLUD1). Post-translationally, succinylation at Lys-81, adjacent to a coenzyme A binding site. Desuccinylated by SIRT5.

It localises to the mitochondrion matrix. The enzyme catalyses a (3S)-3-hydroxyacyl-CoA + NAD(+) = a 3-oxoacyl-CoA + NADH + H(+). It catalyses the reaction (3S)-3-hydroxybutanoyl-CoA + NAD(+) = acetoacetyl-CoA + NADH + H(+). The catalysed reaction is (3S)-hydroxydecanoyl-CoA + NAD(+) = 3-oxodecanoyl-CoA + NADH + H(+). It carries out the reaction (3S)-hydroxyhexadecanoyl-CoA + NAD(+) = 3-oxohexadecanoyl-CoA + NADH + H(+). Its pathway is lipid metabolism; fatty acid beta-oxidation. In terms of biological role, mitochondrial fatty acid beta-oxidation enzyme that catalyzes the third step of the beta-oxidation cycle for medium and short-chain 3-hydroxy fatty acyl-CoAs (C4 to C10). Plays a role in the control of insulin secretion by inhibiting the activation of glutamate dehydrogenase 1 (GLUD1), an enzyme that has an important role in regulating amino acid-induced insulin secretion. Plays a role in the maintenance of normal spermatogenesis through the reduction of fatty acid accumulation in the testes. The sequence is that of Hydroxyacyl-coenzyme A dehydrogenase, mitochondrial (HADH) from Sus scrofa (Pig).